The following is a 132-amino-acid chain: Profilin (132 aa).

This sequence belongs to the profilin family. As to quaternary structure, occurs in many kinds of cells as a complex with monomeric actin in a 1:1 ratio.

It is found in the cytoplasm. Its subcellular location is the cytoskeleton. In terms of biological role, binds to actin and affects the structure of the cytoskeleton. At high concentrations, profilin prevents the polymerization of actin, whereas it enhances it at low concentrations. By binding to PIP2, it inhibits the formation of IP3 and DG. The protein is Profilin of Naegleria pringsheimi (Amoeba).